A 571-amino-acid chain; its full sequence is Proline--tRNA ligase (571 aa).

The protein belongs to the class-II aminoacyl-tRNA synthetase family. ProS type 1 subfamily. As to quaternary structure, homodimer.

The protein resides in the cytoplasm. The enzyme catalyses tRNA(Pro) + L-proline + ATP = L-prolyl-tRNA(Pro) + AMP + diphosphate. Its function is as follows. Catalyzes the attachment of proline to tRNA(Pro) in a two-step reaction: proline is first activated by ATP to form Pro-AMP and then transferred to the acceptor end of tRNA(Pro). As ProRS can inadvertently accommodate and process non-cognate amino acids such as alanine and cysteine, to avoid such errors it has two additional distinct editing activities against alanine. One activity is designated as 'pretransfer' editing and involves the tRNA(Pro)-independent hydrolysis of activated Ala-AMP. The other activity is designated 'posttransfer' editing and involves deacylation of mischarged Ala-tRNA(Pro). The misacylated Cys-tRNA(Pro) is not edited by ProRS. This Pseudomonas paraeruginosa (strain DSM 24068 / PA7) (Pseudomonas aeruginosa (strain PA7)) protein is Proline--tRNA ligase.